A 156-amino-acid polypeptide reads, in one-letter code: Ribosomal RNA large subunit methyltransferase H (156 aa).

Residues leucine 72, glycine 104, and 123-128 (LSKMTL) contribute to the S-adenosyl-L-methionine site.

It belongs to the RNA methyltransferase RlmH family. Homodimer.

The protein localises to the cytoplasm. The enzyme catalyses pseudouridine(1915) in 23S rRNA + S-adenosyl-L-methionine = N(3)-methylpseudouridine(1915) in 23S rRNA + S-adenosyl-L-homocysteine + H(+). Functionally, specifically methylates the pseudouridine at position 1915 (m3Psi1915) in 23S rRNA. In Maridesulfovibrio salexigens (strain ATCC 14822 / DSM 2638 / NCIMB 8403 / VKM B-1763) (Desulfovibrio salexigens), this protein is Ribosomal RNA large subunit methyltransferase H.